We begin with the raw amino-acid sequence, 67 residues long: MGMRMMFTMFLLVVLAITVVSFTSDHASDGRNTAANDKASKLMALRNECCDNPPCKSSNPDLCDWRS.

An N-terminal signal peptide occupies residues 1-21 (MGMRMMFTMFLLVVLAITVVS). The propeptide occupies 22–46 (FTSDHASDGRNTAANDKASKLMALR). Intrachain disulfides connect C49-C55 and C50-C63. The interval 51–53 (DNP) is lacks the Ser-Xaa-Pro motif that is crucial for potent interaction with nAChR.

Belongs to the conotoxin A superfamily. Expressed by the venom duct.

The protein localises to the secreted. Its function is as follows. Alpha-conotoxins act on postsynaptic membranes, they bind to the nicotinic acetylcholine receptors (nAChR) and thus inhibit them. Has possibly a distinct nAChR binding mode from other alpha-conotoxins, due to a different three residue motif (lacks the Ser-Xaa-Pro motif). This Conus quercinus (Oak cone) protein is Alpha-conotoxin-like Qc1.1b.